The primary structure comprises 122 residues: uncharacterized protein (122 aa).

Residues 46 to 116 are a coiled coil; the sequence is KDLQKEVDDL…HQLENKRELN (71 aa).

This is an uncharacterized protein from Invertebrate iridescent virus 6 (IIV-6).